Here is a 278-residue protein sequence, read N- to C-terminus: Large ribosomal subunit protein uL2 (278 aa).

The interval 218-278 (RPHNRGVVMN…IMRSRHQRKK (61 aa)) is disordered.

The protein belongs to the universal ribosomal protein uL2 family. In terms of assembly, part of the 50S ribosomal subunit. Forms a bridge to the 30S subunit in the 70S ribosome.

Its function is as follows. One of the primary rRNA binding proteins. Required for association of the 30S and 50S subunits to form the 70S ribosome, for tRNA binding and peptide bond formation. It has been suggested to have peptidyltransferase activity; this is somewhat controversial. Makes several contacts with the 16S rRNA in the 70S ribosome. The sequence is that of Large ribosomal subunit protein uL2 from Rhizobium etli (strain ATCC 51251 / DSM 11541 / JCM 21823 / NBRC 15573 / CFN 42).